The following is a 63-amino-acid chain: Small ribosomal subunit protein eS31 (63 aa).

4 residues coordinate Zn(2+): Cys-31, Cys-34, Cys-50, and Cys-53.

It belongs to the eukaryotic ribosomal protein eS31 family. Part of the 30S ribosomal subunit. The cofactor is Zn(2+).

In Aeropyrum pernix (strain ATCC 700893 / DSM 11879 / JCM 9820 / NBRC 100138 / K1), this protein is Small ribosomal subunit protein eS31 (rps27ae).